The chain runs to 403 residues: Bifunctional enzyme IspD/IspF (403 aa).

The tract at residues 1-234 (MPTSKRTAAI…ARLAAMLGDI (234 aa)) is 2-C-methyl-D-erythritol 4-phosphate cytidylyltransferase. Residues 235 to 403 (RTGTGYDVHA…SDQEDKGWST (169 aa)) are 2-C-methyl-D-erythritol 2,4-cyclodiphosphate synthase. The a divalent metal cation site is built by aspartate 241 and histidine 243. 4-CDP-2-C-methyl-D-erythritol 2-phosphate is bound by residues 241–243 (DVH) and 267–268 (HS). Histidine 275 is a binding site for a divalent metal cation. 4-CDP-2-C-methyl-D-erythritol 2-phosphate-binding positions include 289-291 (DIG), 365-368 (TTSE), phenylalanine 372, and arginine 375.

The protein in the N-terminal section; belongs to the IspD/TarI cytidylyltransferase family. IspD subfamily. This sequence in the C-terminal section; belongs to the IspF family. The cofactor is a divalent metal cation.

The enzyme catalyses 2-C-methyl-D-erythritol 4-phosphate + CTP + H(+) = 4-CDP-2-C-methyl-D-erythritol + diphosphate. It carries out the reaction 4-CDP-2-C-methyl-D-erythritol 2-phosphate = 2-C-methyl-D-erythritol 2,4-cyclic diphosphate + CMP. It participates in isoprenoid biosynthesis; isopentenyl diphosphate biosynthesis via DXP pathway; isopentenyl diphosphate from 1-deoxy-D-xylulose 5-phosphate: step 2/6. It functions in the pathway isoprenoid biosynthesis; isopentenyl diphosphate biosynthesis via DXP pathway; isopentenyl diphosphate from 1-deoxy-D-xylulose 5-phosphate: step 4/6. Bifunctional enzyme that catalyzes the formation of 4-diphosphocytidyl-2-C-methyl-D-erythritol from CTP and 2-C-methyl-D-erythritol 4-phosphate (MEP) (IspD), and catalyzes the conversion of 4-diphosphocytidyl-2-C-methyl-D-erythritol 2-phosphate (CDP-ME2P) to 2-C-methyl-D-erythritol 2,4-cyclodiphosphate (ME-CPP) with a corresponding release of cytidine 5-monophosphate (CMP) (IspF). This chain is Bifunctional enzyme IspD/IspF, found in Nitrobacter hamburgensis (strain DSM 10229 / NCIMB 13809 / X14).